A 140-amino-acid polypeptide reads, in one-letter code: uncharacterized protein (140 aa).

An N-linked (GlcNAc...) asparagine glycan is attached at N27. 3 helical membrane passes run 45-65, 76-96, and 116-136; these read FSLYWTLIFNGAFYVTAGVYA, VWIFVMYVLYGGVQGLTTGTV, and VPLCCAVVQILFDVVLSYSMV.

The protein belongs to the TMEM170 family.

It is found in the membrane. This is an uncharacterized protein from Saccharomyces cerevisiae (strain ATCC 204508 / S288c) (Baker's yeast).